Here is a 277-residue protein sequence, read N- to C-terminus: Diaminopimelate epimerase (277 aa).

2 residues coordinate substrate: N11 and N62. C71 (proton donor) is an active-site residue. Residues 72–73 (GN), N160, N193, and 211–212 (ER) each bind substrate. The Proton acceptor role is filled by C220. Position 221–222 (221–222 (GT)) interacts with substrate.

Belongs to the diaminopimelate epimerase family. Homodimer.

The protein localises to the cytoplasm. The enzyme catalyses (2S,6S)-2,6-diaminopimelate = meso-2,6-diaminopimelate. The protein operates within amino-acid biosynthesis; L-lysine biosynthesis via DAP pathway; DL-2,6-diaminopimelate from LL-2,6-diaminopimelate: step 1/1. In terms of biological role, catalyzes the stereoinversion of LL-2,6-diaminopimelate (L,L-DAP) to meso-diaminopimelate (meso-DAP), a precursor of L-lysine. This Methanococcus maripaludis (strain DSM 14266 / JCM 13030 / NBRC 101832 / S2 / LL) protein is Diaminopimelate epimerase.